Reading from the N-terminus, the 226-residue chain is 7-cyano-7-deazaguanine synthase (226 aa).

8-18 (ISGGLDSTTCL) contributes to the ATP binding site. Zn(2+) is bound by residues C188, C198, C201, and C204.

The protein belongs to the QueC family. Requires Zn(2+) as cofactor.

It catalyses the reaction 7-carboxy-7-deazaguanine + NH4(+) + ATP = 7-cyano-7-deazaguanine + ADP + phosphate + H2O + H(+). It functions in the pathway purine metabolism; 7-cyano-7-deazaguanine biosynthesis. Its function is as follows. Catalyzes the ATP-dependent conversion of 7-carboxy-7-deazaguanine (CDG) to 7-cyano-7-deazaguanine (preQ(0)). This is 7-cyano-7-deazaguanine synthase from Coxiella burnetii (strain Dugway 5J108-111).